A 249-amino-acid chain; its full sequence is tRNA (guanine-N(1)-)-methyltransferase (249 aa).

S-adenosyl-L-methionine contacts are provided by residues Gly-112 and 132-137; that span reads LGDFVL.

This sequence belongs to the RNA methyltransferase TrmD family. As to quaternary structure, homodimer.

The protein localises to the cytoplasm. It carries out the reaction guanosine(37) in tRNA + S-adenosyl-L-methionine = N(1)-methylguanosine(37) in tRNA + S-adenosyl-L-homocysteine + H(+). Its function is as follows. Specifically methylates guanosine-37 in various tRNAs. The sequence is that of tRNA (guanine-N(1)-)-methyltransferase from Citrifermentans bemidjiense (strain ATCC BAA-1014 / DSM 16622 / JCM 12645 / Bem) (Geobacter bemidjiensis).